A 269-amino-acid chain; its full sequence is MSKFLQGSIFSISKLHVRYSSTRPFLVAPSIANSITTEAPAINHSPELANARKWLPKRCGLITRKKGMMPYFDKSTGERSAATILEVNNVEVIMHRTSEVNGYFACQVGYGSRHLSKVSRQMLGHFASKVVNPKEHVAEFRVKDEKGLIPPGTLLKPSFFKEGQYVDVRSVSKGKGFTGVMKRYGFKGLRASHGTSIMHRHGGSYGQNQDPGRVLPGRKMPGHMGNEHVTIQNVKVLKVDDENNVIWVKGSVAGPKNSFVKIQDAIKKT.

A mitochondrion-targeting transit peptide spans 1 to 19 (MSKFLQGSIFSISKLHVRY).

The protein belongs to the universal ribosomal protein uL3 family. Component of the mitochondrial large ribosomal subunit (mt-LSU). Mature yeast 74S mitochondrial ribosomes consist of a small (37S) and a large (54S) subunit. The 37S small subunit contains a 15S ribosomal RNA (15S mt-rRNA) and 34 different proteins. The 54S large subunit contains a 21S rRNA (21S mt-rRNA) and 46 different proteins.

It is found in the mitochondrion. In terms of biological role, component of the mitochondrial ribosome (mitoribosome), a dedicated translation machinery responsible for the synthesis of mitochondrial genome-encoded proteins, including at least some of the essential transmembrane subunits of the mitochondrial respiratory chain. The mitoribosomes are attached to the mitochondrial inner membrane and translation products are cotranslationally integrated into the membrane. The chain is Large ribosomal subunit protein uL3m (MRPL9) from Saccharomyces cerevisiae (strain ATCC 204508 / S288c) (Baker's yeast).